A 100-amino-acid polypeptide reads, in one-letter code: Small ribosomal subunit protein uS14 (100 aa).

This sequence belongs to the universal ribosomal protein uS14 family. Part of the 30S ribosomal subunit. Contacts proteins S3 and S10.

Binds 16S rRNA, required for the assembly of 30S particles and may also be responsible for determining the conformation of the 16S rRNA at the A site. This chain is Small ribosomal subunit protein uS14, found in Prochlorococcus marinus (strain NATL1A).